A 383-amino-acid chain; its full sequence is tRNA-specific 2-thiouridylase MnmA (383 aa).

ATP contacts are provided by residues 9–16 and methionine 35; that span reads GMSGGVDS. The interval 95-97 is interaction with target base in tRNA; sequence NPD. The active-site Nucleophile is cysteine 100. The cysteines at positions 100 and 196 are disulfide-linked. Glycine 124 is a binding site for ATP. Positions 146–148 are interaction with tRNA; the sequence is KDQ. Cysteine 196 (cysteine persulfide intermediate) is an active-site residue. The interaction with tRNA stretch occupies residues 308-309; sequence RY.

The protein belongs to the MnmA/TRMU family.

It is found in the cytoplasm. It carries out the reaction S-sulfanyl-L-cysteinyl-[protein] + uridine(34) in tRNA + AH2 + ATP = 2-thiouridine(34) in tRNA + L-cysteinyl-[protein] + A + AMP + diphosphate + H(+). Catalyzes the 2-thiolation of uridine at the wobble position (U34) of tRNA, leading to the formation of s(2)U34. In Burkholderia lata (strain ATCC 17760 / DSM 23089 / LMG 22485 / NCIMB 9086 / R18194 / 383), this protein is tRNA-specific 2-thiouridylase MnmA.